A 138-amino-acid chain; its full sequence is Protein FAM136A (138 aa).

N-acetylalanine is present on Ala2. Thr124 and Thr126 each carry phosphothreonine.

This sequence belongs to the FAM136 family.

The protein is Protein FAM136A (FAM136A) of Homo sapiens (Human).